The chain runs to 106 residues: Large ribosomal subunit protein eL42 (106 aa).

This sequence belongs to the eukaryotic ribosomal protein eL42 family.

This is Large ribosomal subunit protein eL42 (RPL44) from Yarrowia lipolytica (strain CLIB 122 / E 150) (Yeast).